Here is a 476-residue protein sequence, read N- to C-terminus: Nitrosuccinate lyase (476 aa).

Positions 137, 140, and 201 each coordinate fumarate. The active-site Proton acceptor is S302. The fumarate site is built by K308 and N310. The active-site Proton donor is the R341.

It belongs to the class-II fumarase/aspartase family. In terms of assembly, homotetramer.

It carries out the reaction 2-nitrobutanedioate = fumarate + nitrite + H(+). It participates in antibiotic biosynthesis. In terms of biological role, part of a gene cluster involved in the biosynthesis of cremeomycin, a light-sensitive o-diazoquinone with antibacterial and antiproliferative effects. Catalyzes the formation of nitrous acid from nitrosuccinic acid (2-nitrobutanedioate) by elimination of its nitro group. This chain is Nitrosuccinate lyase, found in Streptomyces cremeus.